A 171-amino-acid polypeptide reads, in one-letter code: Nicotinamide-nucleotide adenylyltransferase (171 aa).

The protein belongs to the archaeal NMN adenylyltransferase family.

The protein localises to the cytoplasm. It carries out the reaction beta-nicotinamide D-ribonucleotide + ATP + H(+) = diphosphate + NAD(+). Its pathway is cofactor biosynthesis; NAD(+) biosynthesis; NAD(+) from nicotinamide D-ribonucleotide: step 1/1. In Ignicoccus hospitalis (strain KIN4/I / DSM 18386 / JCM 14125), this protein is Nicotinamide-nucleotide adenylyltransferase.